A 240-amino-acid chain; its full sequence is Homeobox-leucine zipper protein HOX14 (240 aa).

The interval 26–64 is disordered; the sequence is SGEVQGERPRARRRRRRGARCVGGGGGGGEVDGGDPKKR. Positions 35-44 are enriched in basic residues; the sequence is RARRRRRRGA. Residues 46 to 56 show a composition bias toward gly residues; sequence CVGGGGGGGEV. The homeobox DNA-binding region spans 59–118; sequence GDPKKRRLSDEQVEMLELSFREERKLETGRKVHLASELGLDPKQVAVWFQNRRARHKSKL. A coiled-coil region spans residues 108–167; sequence QNRRARHKSKLLEEEFSKLKHAHDAAILHKCHLENEVLRLKERLVVAEEEVRRLRSAAGS.

Belongs to the HD-ZIP homeobox family. Class I subfamily. As to expression, expressed in roots, stems, leaf blades and panicles.

It is found in the nucleus. Probable transcription factor. The polypeptide is Homeobox-leucine zipper protein HOX14 (HOX14) (Oryza sativa subsp. japonica (Rice)).